Consider the following 302-residue polypeptide: Glutaminase (302 aa).

Substrate is bound by residues Ser61, Asn111, Glu155, Asn162, Tyr186, Tyr238, and Val256.

The protein belongs to the glutaminase family. In terms of assembly, homotetramer.

It catalyses the reaction L-glutamine + H2O = L-glutamate + NH4(+). This chain is Glutaminase, found in Stutzerimonas stutzeri (strain A1501) (Pseudomonas stutzeri).